Consider the following 348-residue polypeptide: 4-hydroxy-2-oxovalerate aldolase 2 (348 aa).

Residues 5-256 (LQICDSTLRD…EARIKLFDAL (252 aa)) enclose the Pyruvate carboxyltransferase domain. A substrate-binding site is contributed by 13-14 (RD). D14 contacts Mn(2+). H17 functions as the Proton acceptor in the catalytic mechanism. Residues S168 and H195 each coordinate substrate. Residues H195 and H197 each contribute to the Mn(2+) site.

Belongs to the 4-hydroxy-2-oxovalerate aldolase family.

It catalyses the reaction (S)-4-hydroxy-2-oxopentanoate = acetaldehyde + pyruvate. This Salinispora arenicola (strain CNS-205) protein is 4-hydroxy-2-oxovalerate aldolase 2.